The chain runs to 142 residues: Universal stress protein G (142 aa).

It belongs to the universal stress protein A family.

This is Universal stress protein G (uspG) from Salmonella typhi.